A 197-amino-acid chain; its full sequence is Dephospho-CoA kinase (197 aa).

Positions 4 to 197 (LIGLTGGIAT…VLKWLKTITK (194 aa)) constitute a DPCK domain. 12 to 17 (ATGKST) is a binding site for ATP.

Belongs to the CoaE family.

It localises to the cytoplasm. It carries out the reaction 3'-dephospho-CoA + ATP = ADP + CoA + H(+). Its pathway is cofactor biosynthesis; coenzyme A biosynthesis; CoA from (R)-pantothenate: step 5/5. Functionally, catalyzes the phosphorylation of the 3'-hydroxyl group of dephosphocoenzyme A to form coenzyme A. In Lactiplantibacillus plantarum (strain ATCC BAA-793 / NCIMB 8826 / WCFS1) (Lactobacillus plantarum), this protein is Dephospho-CoA kinase.